Consider the following 187-residue polypeptide: MSSDTGDRTWGHLAATEHYGRITDTTDYIQVDKENLKNDPYYNSSQASHCMIFARNNKKTFGVYNPRAAILMQMRFDGNLGFPGGLVDAGEDSIKALNRELTEEMNLDTSKHSVSESSYVVTHWSISKRLCLHFYALEVSLAELYEIEKRALLAKDYGSEVLGTIRMPLYTMGDGYRGFPTFLTTPS.

The 145-residue stretch at 43–187 (NSSQASHCMI…GFPTFLTTPS (145 aa)) folds into the Nudix hydrolase domain. Substrate is bound at residue Phe-82. Mn(2+) is bound by residues Gly-84, Glu-100, Glu-104, and Glu-160. Positions 85–106 (GLVDAGEDSIKALNRELTEEMN) match the Nudix box motif.

The protein belongs to the Nudix hydrolase family. NUDT16 subfamily. Homodimer. Mg(2+) serves as cofactor. It depends on Mn(2+) as a cofactor. Requires Co(2+) as cofactor.

Its subcellular location is the nucleus. The protein resides in the nucleolus. It is found in the nucleoplasm. It localises to the cytoplasm. It catalyses the reaction a 5'-end (N(7)-methyl 5'-triphosphoguanosine)-ribonucleoside in mRNA + H2O = N(7)-methyl-GDP + a 5'-end phospho-ribonucleoside in mRNA + 2 H(+). It carries out the reaction IDP + H2O = IMP + phosphate + H(+). The catalysed reaction is dIDP + H2O = dIMP + phosphate + H(+). Its function is as follows. RNA-binding and decapping enzyme that catalyzes the cleavage of the cap structure of snoRNAs in a metal-dependent manner. Has diphosphatase activity and removes m7G caps from U8 snoRNA. May catalyze the cleavage of the cap structure on mRNAs. May also act as a phosphatase; hydrolyzes the non-canonical purine nucleotides inosine diphosphate (IDP) and deoxyinosine diphosphate (dITP). May bind to the U8 snoRNA. This Homalodisca vitripennis (Glassy-winged sharpshooter) protein is U8 snoRNA-decapping enzyme (NUDT16).